A 542-amino-acid chain; its full sequence is Calcium/calmodulin-dependent protein kinase type II subunit beta (542 aa).

A Protein kinase domain is found at 14 to 272 (YQLYEDIGKG…AHEALKHPWV (259 aa)). Tyr17 carries the post-translational modification Phosphotyrosine. ATP is bound by residues 20 to 28 (IGKGAFSVV) and Lys43. The Proton acceptor role is filled by Asp136. The interval 283 to 292 (HRQETVECLK) is autoinhibitory domain. Thr287 is subject to Phosphothreonine; by autocatalysis. A calmodulin-binding region spans residues 291 to 301 (LKKFNARRKLK). Residues Thr306 and Thr307 each carry the phosphothreonine; by autocatalysis modification. Positions 349–376 (ADGVKPQTNSTKNSSAITSPKGSLPPAA) are disordered. The segment covering 354–369 (PQTNSTKNSSAITSPK) has biased composition (polar residues). A phosphoserine mark is found at Ser367, Ser371, Ser394, and Ser397. Phosphothreonine occurs at positions 400 and 401.

Belongs to the protein kinase superfamily. CAMK Ser/Thr protein kinase family. CaMK subfamily. In terms of assembly, CAMK2 is composed of 4 different chains: alpha (CAMK2A), beta (CAMK2B), gamma (CAMK2G), and delta (CAMK2D). The different isoforms assemble into homo- or heteromultimeric holoenzymes composed of 12 subunits with two hexameric rings stacked one on top of the other. Interacts with SYNGAP1, CAMK2N2 and MPDZ. Interacts with FOXO3. Interacts (when in a kinase inactive state not associated with calmodulin) with ARC; leading to target ARC to inactive synapses. Interacts with CAMK2N1; this interaction requires CAMK2B activation by Ca(2+). In terms of processing, autophosphorylation of Thr-287 following activation by Ca(2+)/calmodulin. Phosphorylation of Thr-287 locks the kinase into an activated state.

The protein resides in the cytoplasm. Its subcellular location is the cytoskeleton. The protein localises to the microtubule organizing center. It is found in the centrosome. It localises to the sarcoplasmic reticulum membrane. The protein resides in the synapse. It carries out the reaction L-seryl-[protein] + ATP = O-phospho-L-seryl-[protein] + ADP + H(+). The enzyme catalyses L-threonyl-[protein] + ATP = O-phospho-L-threonyl-[protein] + ADP + H(+). Its activity is regulated as follows. Activated by Ca(2+)/calmodulin. Binding of calmodulin results in conformational change that relieves intrasteric autoinhibition and allows autophosphorylation of Thr-287 which turns the kinase in a constitutively active form and confers to the kinase a Ca(2+)-independent activity. Functionally, calcium/calmodulin-dependent protein kinase that functions autonomously after Ca(2+)/calmodulin-binding and autophosphorylation, and is involved in dendritic spine and synapse formation, neuronal plasticity and regulation of sarcoplasmic reticulum Ca(2+) transport in skeletal muscle. In neurons, plays an essential structural role in the reorganization of the actin cytoskeleton during plasticity by binding and bundling actin filaments in a kinase-independent manner. This structural function is required for correct targeting of CaMK2A, which acts downstream of NMDAR to promote dendritic spine and synapse formation and maintain synaptic plasticity which enables long-term potentiation (LTP) and hippocampus-dependent learning. In developing hippocampal neurons, promotes arborization of the dendritic tree and in mature neurons, promotes dendritic remodeling. Also regulates the migration of developing neurons. Participates in the modulation of skeletal muscle function in response to exercise. In slow-twitch muscles, is involved in regulation of sarcoplasmic reticulum (SR) Ca(2+) transport and in fast-twitch muscle participates in the control of Ca(2+) release from the SR through phosphorylation of triadin, a ryanodine receptor-coupling factor, and phospholamban (PLN/PLB), an endogenous inhibitor of SERCA2A/ATP2A2. In response to interferon-gamma (IFN-gamma) stimulation, catalyzes phosphorylation of STAT1, stimulating the JAK-STAT signaling pathway. Phosphorylates reticulophagy regulator RETREG1 at 'Thr-134' under endoplasmic reticulum stress conditions which enhances RETREG1 oligomerization and its membrane scission and reticulophagy activity. The chain is Calcium/calmodulin-dependent protein kinase type II subunit beta (Camk2b) from Mus musculus (Mouse).